A 118-amino-acid chain; its full sequence is Aspartate 1-decarboxylase (118 aa).

Ser-25 serves as the catalytic Schiff-base intermediate with substrate; via pyruvic acid. The residue at position 25 (Ser-25) is a Pyruvic acid (Ser). Substrate is bound at residue Thr-57. Tyr-58 (proton donor) is an active-site residue. 73–75 (GAA) contributes to the substrate binding site.

This sequence belongs to the PanD family. Heterooctamer of four alpha and four beta subunits. It depends on pyruvate as a cofactor. In terms of processing, is synthesized initially as an inactive proenzyme, which is activated by self-cleavage at a specific serine bond to produce a beta-subunit with a hydroxyl group at its C-terminus and an alpha-subunit with a pyruvoyl group at its N-terminus.

The protein localises to the cytoplasm. The enzyme catalyses L-aspartate + H(+) = beta-alanine + CO2. Its pathway is cofactor biosynthesis; (R)-pantothenate biosynthesis; beta-alanine from L-aspartate: step 1/1. In terms of biological role, catalyzes the pyruvoyl-dependent decarboxylation of aspartate to produce beta-alanine. This chain is Aspartate 1-decarboxylase, found in Phenylobacterium zucineum (strain HLK1).